Reading from the N-terminus, the 621-residue chain is Chaperone protein HtpG (621 aa).

The tract at residues 1–328 (MIQEKKKFDA…SEDLPLNISR (328 aa)) is a; substrate-binding. Residues 329 to 544 (ESLQHNSVLE…DAAMDIRMER (216 aa)) are b. Positions 475–494 (SDIDVEQTTSQSEAKNTDSK) are disordered. The c stretch occupies residues 545 to 621 (FLIEQKQIAN…LNDIVQKAIL (77 aa)).

Belongs to the heat shock protein 90 family. Homodimer.

Its subcellular location is the cytoplasm. Its function is as follows. Molecular chaperone. Has ATPase activity. This chain is Chaperone protein HtpG, found in Rickettsia rickettsii (strain Iowa).